A 252-amino-acid chain; its full sequence is Thiamine thiazole synthase (252 aa).

NAD(+) is bound by residues serine 35, glutamate 54–lysine 55, glycine 62, valine 126, and histidine 152–aspartate 154. Aspartate 154 and histidine 169 together coordinate Fe cation. NAD(+) is bound at residue methionine 217. Arginine 227 lines the glycine pocket.

This sequence belongs to the THI4 family. In terms of assembly, homooctamer; tetramer of dimers. Requires Fe(2+) as cofactor.

It carries out the reaction hydrogen sulfide + glycine + NAD(+) = ADP-5-ethyl-4-methylthiazole-2-carboxylate + nicotinamide + 3 H2O + H(+). It participates in cofactor biosynthesis; thiamine diphosphate biosynthesis. Involved in the biosynthesis of the thiazole moiety of thiamine. Catalyzes the conversion of NAD and glycine to adenosine diphosphate 5-(2-hydroxyethyl)-4-methylthiazole-2-carboxylate (ADT), an adenylated thiazole intermediate, using free sulfide as a source of sulfur. The chain is Thiamine thiazole synthase from Pyrococcus furiosus (strain ATCC 43587 / DSM 3638 / JCM 8422 / Vc1).